The following is a 227-amino-acid chain: 7-cyano-7-deazaguanine synthase (227 aa).

8 to 18 (FSGGQDSTTCL) is a binding site for ATP. Zn(2+) is bound by residues Cys-187, Cys-196, Cys-199, and Cys-202.

Belongs to the QueC family. It depends on Zn(2+) as a cofactor.

The enzyme catalyses 7-carboxy-7-deazaguanine + NH4(+) + ATP = 7-cyano-7-deazaguanine + ADP + phosphate + H2O + H(+). It participates in purine metabolism; 7-cyano-7-deazaguanine biosynthesis. In terms of biological role, catalyzes the ATP-dependent conversion of 7-carboxy-7-deazaguanine (CDG) to 7-cyano-7-deazaguanine (preQ(0)). The chain is 7-cyano-7-deazaguanine synthase from Aliivibrio salmonicida (strain LFI1238) (Vibrio salmonicida (strain LFI1238)).